The chain runs to 247 residues: 3-oxoacyl-[acyl-carrier-protein] reductase MabA (247 aa).

NADP(+) contacts are provided by residues 25 to 27 (RGI), Arg47, 61 to 62 (DV), Gly90, Tyr153, Lys157, Ile186, and Arg197. Tyr153 serves as the catalytic Proton acceptor.

This sequence belongs to the short-chain dehydrogenases/reductases (SDR) family. In terms of assembly, homotetramer.

It is found in the secreted. The protein resides in the cell wall. It carries out the reaction a (3R)-hydroxyacyl-[ACP] + NADP(+) = a 3-oxoacyl-[ACP] + NADPH + H(+). It participates in lipid metabolism; mycolic acid biosynthesis. Part of the mycobacterial fatty acid elongation system FAS-II, which is involved in mycolic acid biosynthesis. Catalyzes the NADPH-dependent reduction of beta-ketoacyl derivatives, the second step of the FAS-II elongation cycle. This chain is 3-oxoacyl-[acyl-carrier-protein] reductase MabA, found in Mycobacterium bovis (strain ATCC BAA-935 / AF2122/97).